A 632-amino-acid chain; its full sequence is Phosphomethylpyrimidine synthase (632 aa).

Over residues 1–13 the composition is skewed to polar residues; that stretch reads MNIRSNPDTTLPA. Residues 1–26 are disordered; it reads MNIRSNPDTTLPAVTTGPLPSSRKIF. Residues Asn-221, Met-250, Tyr-279, His-315, 335-337, 376-379, and Glu-415 each bind substrate; these read SRG and DGLR. His-419 serves as a coordination point for Zn(2+). Tyr-442 contributes to the substrate binding site. Position 483 (His-483) interacts with Zn(2+). Residues Cys-563, Cys-566, and Cys-571 each coordinate [4Fe-4S] cluster.

This sequence belongs to the ThiC family. In terms of assembly, homodimer. [4Fe-4S] cluster is required as a cofactor.

The catalysed reaction is 5-amino-1-(5-phospho-beta-D-ribosyl)imidazole + S-adenosyl-L-methionine = 4-amino-2-methyl-5-(phosphooxymethyl)pyrimidine + CO + 5'-deoxyadenosine + formate + L-methionine + 3 H(+). Its pathway is cofactor biosynthesis; thiamine diphosphate biosynthesis. Its function is as follows. Catalyzes the synthesis of the hydroxymethylpyrimidine phosphate (HMP-P) moiety of thiamine from aminoimidazole ribotide (AIR) in a radical S-adenosyl-L-methionine (SAM)-dependent reaction. This chain is Phosphomethylpyrimidine synthase, found in Afipia carboxidovorans (strain ATCC 49405 / DSM 1227 / KCTC 32145 / OM5) (Oligotropha carboxidovorans).